A 153-amino-acid chain; its full sequence is Aspartate carbamoyltransferase regulatory chain (153 aa).

The Zn(2+) site is built by cysteine 109, cysteine 114, cysteine 138, and cysteine 141.

It belongs to the PyrI family. Contains catalytic and regulatory chains. Zn(2+) is required as a cofactor.

In terms of biological role, involved in allosteric regulation of aspartate carbamoyltransferase. This chain is Aspartate carbamoyltransferase regulatory chain, found in Shigella flexneri serotype 5b (strain 8401).